A 714-amino-acid polypeptide reads, in one-letter code: Fatty acid oxidation complex subunit alpha (714 aa).

The enoyl-CoA hydratase stretch occupies residues 1–190 (MEMASAFTLN…KLGLVDDVVP (190 aa)). The segment at 306–714 (APLNSVGILG…FWKTTATDLQ (409 aa)) is 3-hydroxyacyl-CoA dehydrogenase.

It in the N-terminal section; belongs to the enoyl-CoA hydratase/isomerase family. This sequence in the central section; belongs to the 3-hydroxyacyl-CoA dehydrogenase family. In terms of assembly, heterotetramer of two alpha chains (FadJ) and two beta chains (FadI).

The protein resides in the cytoplasm. The catalysed reaction is a (3S)-3-hydroxyacyl-CoA = a (2E)-enoyl-CoA + H2O. It catalyses the reaction a 4-saturated-(3S)-3-hydroxyacyl-CoA = a (3E)-enoyl-CoA + H2O. It carries out the reaction a (3S)-3-hydroxyacyl-CoA + NAD(+) = a 3-oxoacyl-CoA + NADH + H(+). The enzyme catalyses (3S)-3-hydroxybutanoyl-CoA = (3R)-3-hydroxybutanoyl-CoA. It participates in lipid metabolism; fatty acid beta-oxidation. Functionally, catalyzes the formation of a hydroxyacyl-CoA by addition of water on enoyl-CoA. Also exhibits 3-hydroxyacyl-CoA epimerase and 3-hydroxyacyl-CoA dehydrogenase activities. The polypeptide is Fatty acid oxidation complex subunit alpha (Escherichia coli (strain SMS-3-5 / SECEC)).